A 248-amino-acid polypeptide reads, in one-letter code: Proteasome subunit alpha type-7 (248 aa).

A glycan (O-linked (GlcNAc) serine) is linked at Ser130. Tyr153 carries the post-translational modification Phosphotyrosine. Lys227 is modified (N6-acetyllysine).

It belongs to the peptidase T1A family. The 26S proteasome consists of a 20S proteasome core and two 19S regulatory subunits. The 20S proteasome core is a barrel-shaped complex made of 28 subunits that are arranged in four stacked rings. The two outer rings are each formed by seven alpha subunits, and the two inner rings are formed by seven beta subunits. The proteolytic activity is exerted by three beta-subunits PSMB5, PSMB6 and PSMB7. PSMA7 interacts directly with the PSMG1-PSMG2 heterodimer which promotes 20S proteasome assembly. Interacts with HIF1A. Interacts with RAB7A. Interacts with PRKN. Interacts with ABL1 and ABL2. Interacts with EMAP2. Interacts with MAVS.

The protein localises to the cytoplasm. Its subcellular location is the nucleus. In terms of biological role, component of the 20S core proteasome complex involved in the proteolytic degradation of most intracellular proteins. This complex plays numerous essential roles within the cell by associating with different regulatory particles. Associated with two 19S regulatory particles, forms the 26S proteasome and thus participates in the ATP-dependent degradation of ubiquitinated proteins. The 26S proteasome plays a key role in the maintenance of protein homeostasis by removing misfolded or damaged proteins that could impair cellular functions, and by removing proteins whose functions are no longer required. Associated with the PA200 or PA28, the 20S proteasome mediates ubiquitin-independent protein degradation. This type of proteolysis is required in several pathways including spermatogenesis (20S-PA200 complex) or generation of a subset of MHC class I-presented antigenic peptides (20S-PA28 complex). Inhibits the transactivation function of HIF-1A under both normoxic and hypoxia-mimicking conditions. The interaction with EMAP2 increases the proteasome-mediated HIF-1A degradation under the hypoxic conditions. Plays a role in hepatitis C virus internal ribosome entry site-mediated translation. Mediates nuclear translocation of the androgen receptor (AR) and thereby enhances androgen-mediated transactivation. Promotes MAVS degradation and thereby negatively regulates MAVS-mediated innate immune response. This is Proteasome subunit alpha type-7 (PSMA7) from Bos taurus (Bovine).